Here is a 429-residue protein sequence, read N- to C-terminus: Serine--tRNA ligase (429 aa).

234 to 236 (TSE) contributes to the L-serine binding site. Residues 265-267 (RKE) and valine 281 contribute to the ATP site. Residue glutamate 288 participates in L-serine binding. 352 to 355 (ELVS) provides a ligand contact to ATP. Position 389 (threonine 389) interacts with L-serine.

It belongs to the class-II aminoacyl-tRNA synthetase family. Type-1 seryl-tRNA synthetase subfamily. As to quaternary structure, homodimer. The tRNA molecule probably binds across the dimer.

The enzyme catalyses tRNA(Ser) + L-serine + ATP = L-seryl-tRNA(Ser) + AMP + diphosphate + H(+). It catalyses the reaction tRNA(Sec) + L-serine + ATP = L-seryl-tRNA(Sec) + AMP + diphosphate + H(+). The protein operates within aminoacyl-tRNA biosynthesis; selenocysteinyl-tRNA(Sec) biosynthesis; L-seryl-tRNA(Sec) from L-serine and tRNA(Sec): step 1/1. Catalyzes the attachment of serine to tRNA(Ser). Is also probably able to aminoacylate tRNA(Sec) with serine, to form the misacylated tRNA L-seryl-tRNA(Sec), which will be further converted into selenocysteinyl-tRNA(Sec). The chain is Serine--tRNA ligase from Encephalitozoon cuniculi (strain GB-M1) (Microsporidian parasite).